The primary structure comprises 560 residues: 2-succinylbenzoate--CoA ligase, chloroplastic/peroxisomal (560 aa).

Residues 1–15 (MANHSRPHICQCLTR) constitute a chloroplast transit peptide. The next 3 helical transmembrane spans lie at 69 to 89 (LFLEWLLAVALVGGVVAPLNY), 189 to 209 (GVTISHLAFITQSLAKIAIAG), and 225 to 245 (IGGLSSAMAMLMVGACHVLLP). The Microbody targeting signal motif lies at 558–560 (SSL).

The protein belongs to the ATP-dependent AMP-binding enzyme family. MenE subfamily. In terms of tissue distribution, high expression in young leaves and flowers. Not expressed in roots.

Its subcellular location is the plastid. The protein resides in the chloroplast membrane. It is found in the peroxisome membrane. It carries out the reaction 2-succinylbenzoate + ATP + CoA = 2-succinylbenzoyl-CoA + AMP + diphosphate. Functionally, involved in the biosynthesis of phylloquinone (vitamin K1). Converts 2-succinylbenzoate (OSB) to 2-succinylbenzoyl-CoA (OSB-CoA). In Arabidopsis thaliana (Mouse-ear cress), this protein is 2-succinylbenzoate--CoA ligase, chloroplastic/peroxisomal (AAE14).